Consider the following 283-residue polypeptide: Urease accessory protein UreD 2 (283 aa).

The span at 1–11 (MGRRAPDRLDR) shows a compositional bias: basic and acidic residues. Residues 1–30 (MGRRAPDRLDRGVTTTSPRTQAPPQAGRGV) are disordered. Polar residues predominate over residues 13–23 (VTTTSPRTQAP).

The protein belongs to the UreD family. As to quaternary structure, ureD, UreF and UreG form a complex that acts as a GTP-hydrolysis-dependent molecular chaperone, activating the urease apoprotein by helping to assemble the nickel containing metallocenter of UreC. The UreE protein probably delivers the nickel.

It is found in the cytoplasm. Its function is as follows. Required for maturation of urease via the functional incorporation of the urease nickel metallocenter. This Saccharopolyspora erythraea (strain ATCC 11635 / DSM 40517 / JCM 4748 / NBRC 13426 / NCIMB 8594 / NRRL 2338) protein is Urease accessory protein UreD 2.